A 434-amino-acid chain; its full sequence is UPF0597 protein CLK_1462 (434 aa).

Belongs to the UPF0597 family.

This chain is UPF0597 protein CLK_1462, found in Clostridium botulinum (strain Loch Maree / Type A3).